A 93-amino-acid chain; its full sequence is uncharacterized protein (93 aa).

This is an uncharacterized protein from Saimiriine herpesvirus 2 (strain 11) (SaHV-2).